Consider the following 248-residue polypeptide: Aquaporin Z (248 aa).

2 consecutive transmembrane segments (helical) span residues 11–31 (FIGT…AAAF) and 36–56 (IGFA…AFAI). The NPA 1 signature appears at 65–67 (NPA). The next 3 membrane-spanning stretches (helical) occupy residues 87–107 (IAAQ…IAGG), 132–152 (LLAC…IILG), and 161–181 (GFAP…SIPV). The short motif at 187-189 (NPA) is the NPA 2 element. A helical membrane pass occupies residues 203–223 (IAELWLFWLAPIVGAALAGLF).

It belongs to the MIP/aquaporin (TC 1.A.8) family. In terms of assembly, homotetramer.

It localises to the cell inner membrane. The catalysed reaction is H2O(in) = H2O(out). Functionally, channel that permits osmotically driven movement of water in both directions. It is involved in the osmoregulation and in the maintenance of cell turgor during volume expansion in rapidly growing cells. It mediates rapid entry or exit of water in response to abrupt changes in osmolarity. The polypeptide is Aquaporin Z (Gloeobacter violaceus (strain ATCC 29082 / PCC 7421)).